The following is a 508-amino-acid chain: Steroid 17-alpha-hydroxylase/17,20 lyase (508 aa).

Residue Cys445 coordinates heme.

This sequence belongs to the cytochrome P450 family. The cofactor is heme.

It is found in the membrane. The enzyme catalyses a C21-steroid + reduced [NADPH--hemoprotein reductase] + O2 = a 17alpha-hydroxy-C21-steroid + oxidized [NADPH--hemoprotein reductase] + H2O + H(+). It catalyses the reaction 17alpha-hydroxyprogesterone + reduced [NADPH--hemoprotein reductase] + O2 = androst-4-ene-3,17-dione + acetate + oxidized [NADPH--hemoprotein reductase] + H2O + 2 H(+). It carries out the reaction 17alpha-hydroxypregnenolone + reduced [NADPH--hemoprotein reductase] + O2 = 3beta-hydroxyandrost-5-en-17-one + acetate + oxidized [NADPH--hemoprotein reductase] + H2O + 2 H(+). The protein operates within lipid metabolism; steroid biosynthesis. Functionally, conversion of pregnenolone and progesterone to their 17-alpha-hydroxylated products and subsequently to dehydroepiandrosterone (DHEA) and androstenedione. Catalyzes both the 17-alpha-hydroxylation and the 17,20-lyase reaction. The chain is Steroid 17-alpha-hydroxylase/17,20 lyase (CYP17A1) from Gallus gallus (Chicken).